A 122-amino-acid chain; its full sequence is Large ribosomal subunit protein uL18 (122 aa).

Over residues 1-22 (MDKNKKLQSKRLRRRRHVRNKL) the composition is skewed to basic residues. The interval 1–25 (MDKNKKLQSKRLRRRRHVRNKLRGS) is disordered.

The protein belongs to the universal ribosomal protein uL18 family. Part of the 50S ribosomal subunit; part of the 5S rRNA/L5/L18/L25 subcomplex. Contacts the 5S and 23S rRNAs.

In terms of biological role, this is one of the proteins that bind and probably mediate the attachment of the 5S RNA into the large ribosomal subunit, where it forms part of the central protuberance. The protein is Large ribosomal subunit protein uL18 of Rhodopirellula baltica (strain DSM 10527 / NCIMB 13988 / SH1).